The primary structure comprises 204 residues: Ubiquitin-conjugating enzyme E2 T (204 aa).

Residues 2-152 form the UBC core domain; that stretch reads QRASRLKKEL…AKQWTEAHAR (151 aa). The active-site Glycyl thioester intermediate is the cysteine 86. Glycyl lysine isopeptide (Lys-Gly) (interchain with G-Cter in ubiquitin) cross-links involve residues lysine 91 and lysine 181. The interval 150 to 204 is disordered; the sequence is HARQKQKADEEELGTSSEVGDSEESHSTQKRKARPLGGMEKKFSPDVQRVYPGPS. Residues lysine 190 and lysine 191 each participate in a glycyl lysine isopeptide (Lys-Gly) (interchain with G-Cter in SUMO2) cross-link. Serine 193 is modified (phosphoserine).

The protein belongs to the ubiquitin-conjugating enzyme family. As to quaternary structure, interacts with FANCL and BRCA1. In terms of processing, auto-ubiquitinated. Effects of auto-monoubiquitination at Lys-91 and Lys-181 are unclear.

The protein localises to the nucleus. It carries out the reaction S-ubiquitinyl-[E1 ubiquitin-activating enzyme]-L-cysteine + [E2 ubiquitin-conjugating enzyme]-L-cysteine = [E1 ubiquitin-activating enzyme]-L-cysteine + S-ubiquitinyl-[E2 ubiquitin-conjugating enzyme]-L-cysteine.. It functions in the pathway protein modification; protein ubiquitination. Accepts ubiquitin from the E1 complex and catalyzes its covalent attachment to other proteins. Catalyzes monoubiquitination. Involved in mitomycin-C (MMC)-induced DNA repair: acts as a specific E2 ubiquitin-conjugating enzyme for the Fanconi anemia complex by associating with E3 ubiquitin-protein ligase FANCL and catalyzing monoubiquitination of FANCD2, a key step in the DNA damage pathway. Also mediates monoubiquitination of FANCL and FANCI. May contribute to ubiquitination and degradation of BRCA1. In vitro able to promote polyubiquitination using all 7 ubiquitin Lys residues, but may prefer 'Lys-11'-, 'Lys-27'-, 'Lys-48'- and 'Lys-63'-linked polyubiquitination. In Mus musculus (Mouse), this protein is Ubiquitin-conjugating enzyme E2 T (Ube2t).